We begin with the raw amino-acid sequence, 152 residues long: Inner membrane protein YbbJ (152 aa).

A helical membrane pass occupies residues 1 to 21 (MMELMVVHPHIFWLSLGGLLL). Topologically, residues 22-31 (AAEMLGGNGY) are cytoplasmic. The helical transmembrane segment at 32–52 (LLWSGVAAVITGLVVWLVPLG) threads the bilayer. Over 53–54 (WE) the chain is Periplasmic. Residues 55–75 (WQGVMFAILTLLAAWLWWKWL) form a helical membrane-spanning segment. The Cytoplasmic portion of the chain corresponds to 76–152 (SRRVREQKHS…ITLHIRAVSS (77 aa)).

The protein to M.jannaschii MJ0826.

It is found in the cell inner membrane. The sequence is that of Inner membrane protein YbbJ (ybbJ) from Escherichia coli (strain K12).